Consider the following 255-residue polypeptide: 1-(5-phosphoribosyl)-5-[(5-phosphoribosylamino)methylideneamino] imidazole-4-carboxamide isomerase (255 aa).

The active-site Proton acceptor is D8. The active-site Proton donor is D129.

It belongs to the HisA/HisF family.

Its subcellular location is the cytoplasm. It catalyses the reaction 1-(5-phospho-beta-D-ribosyl)-5-[(5-phospho-beta-D-ribosylamino)methylideneamino]imidazole-4-carboxamide = 5-[(5-phospho-1-deoxy-D-ribulos-1-ylimino)methylamino]-1-(5-phospho-beta-D-ribosyl)imidazole-4-carboxamide. It functions in the pathway amino-acid biosynthesis; L-histidine biosynthesis; L-histidine from 5-phospho-alpha-D-ribose 1-diphosphate: step 4/9. This Synechococcus sp. (strain CC9902) protein is 1-(5-phosphoribosyl)-5-[(5-phosphoribosylamino)methylideneamino] imidazole-4-carboxamide isomerase.